The following is an 89-amino-acid chain: Small ribosomal subunit protein uS14 (89 aa).

The protein belongs to the universal ribosomal protein uS14 family. As to quaternary structure, part of the 30S ribosomal subunit. Contacts proteins S3 and S10.

Functionally, binds 16S rRNA, required for the assembly of 30S particles and may also be responsible for determining the conformation of the 16S rRNA at the A site. This Amoebophilus asiaticus (strain 5a2) protein is Small ribosomal subunit protein uS14.